Reading from the N-terminus, the 490-residue chain is Ribulose bisphosphate carboxylase large chain (490 aa).

The substrate site is built by Asn-127 and Thr-177. The Proton acceptor role is filled by Lys-179. Lys-181 contacts substrate. The Mg(2+) site is built by Lys-205, Asp-207, and Glu-208. Lys-205 bears the N6-carboxylysine mark. His-297 acts as the Proton acceptor in catalysis. Substrate is bound by residues Arg-298, His-330, and Ser-382.

The protein belongs to the RuBisCO large chain family. Type I subfamily. In terms of assembly, heterohexadecamer of 8 large chains and 8 small chains. Mg(2+) serves as cofactor.

It is found in the plastid. The protein localises to the chloroplast. The catalysed reaction is 2 (2R)-3-phosphoglycerate + 2 H(+) = D-ribulose 1,5-bisphosphate + CO2 + H2O. It catalyses the reaction D-ribulose 1,5-bisphosphate + O2 = 2-phosphoglycolate + (2R)-3-phosphoglycerate + 2 H(+). In terms of biological role, ruBisCO catalyzes two reactions: the carboxylation of D-ribulose 1,5-bisphosphate, the primary event in carbon dioxide fixation, as well as the oxidative fragmentation of the pentose substrate in the photorespiration process. Both reactions occur simultaneously and in competition at the same active site. The protein is Ribulose bisphosphate carboxylase large chain of Thalassiosira pseudonana (Marine diatom).